The sequence spans 219 residues: MAFLLHQARFYTTVNHLRDLPPTVQPEIAFAGRSNAGKSTAINVLCNQKRLAFASKTPGRTQHINYFSVGPAAEPVANLVDLPGYGYAEVPGAAKAHWEMLLSSYLATRSQLCGLILMMDSRRPLTDLDRRMIEWFAPTGKPIHTLLTKCDKLTRQESINALRNTQKGLDAYRDQGVKGKLTVQLFSALKRTGLDEAHELIESWLRPSVADAEGAPVAQ.

Positions 24-207 (VQPEIAFAGR…HELIESWLRP (184 aa)) constitute an EngB-type G domain. Residues 32-39 (GRSNAGKS), 59-63 (GRTQH), 81-84 (DLPG), 148-151 (TKCD), and 186-188 (FSA) contribute to the GTP site. S39 and T61 together coordinate Mg(2+).

It belongs to the TRAFAC class TrmE-Era-EngA-EngB-Septin-like GTPase superfamily. EngB GTPase family. Mg(2+) serves as cofactor.

Necessary for normal cell division and for the maintenance of normal septation. The sequence is that of Probable GTP-binding protein EngB from Burkholderia vietnamiensis (strain G4 / LMG 22486) (Burkholderia cepacia (strain R1808)).